A 568-amino-acid chain; its full sequence is ATP-dependent RNA helicase MRH4, mitochondrial (568 aa).

A mitochondrion-targeting transit peptide spans 1–50; it reads MVSILAIRTFNPLGHFVSTQCVRAYAINSVRAGSKSSSVRAGSKNDTTRA. Polar residues predominate over residues 36–49; that stretch reads SSSVRAGSKNDTTR. The segment at 36–64 is disordered; that stretch reads SSSVRAGSKNDTTRASSKKNKAGKSKLQL. A Q motif motif is present at residues 143-150; it reads EIHPSPIQ. The Helicase ATP-binding domain maps to 160–348; that stretch reads NLMEPKLQVH…TKMFPNAIPL (189 aa). Residue 173-180 participates in ATP binding; that stretch reads AETGSGKT. The DEAD box motif lies at 296–299; the sequence is DEAD. The 190-residue stretch at 379–568 folds into the Helicase C-terminal domain; the sequence is ALAQTLYAIA…TILKKNKALT (190 aa).

The protein belongs to the DEAD box helicase family. MRH4 subfamily.

It localises to the mitochondrion. The enzyme catalyses ATP + H2O = ADP + phosphate + H(+). ATP-binding RNA helicase involved in mitochondrial RNA metabolism. Required for maintenance of mitochondrial DNA. The chain is ATP-dependent RNA helicase MRH4, mitochondrial (MRH4) from Candida glabrata (strain ATCC 2001 / BCRC 20586 / JCM 3761 / NBRC 0622 / NRRL Y-65 / CBS 138) (Yeast).